We begin with the raw amino-acid sequence, 893 residues long: Translation initiation factor IF-2 (893 aa).

Disordered stretches follow at residues 135 to 169 (KAKAKADAEAKAKAKVLTEKPVQESAEDKAAKAEE) and 201 to 300 (ENEK…ESMD). Basic and acidic residues predominate over residues 201–224 (ENEKRWAEEEKARKEAEKTVDHHV). Positions 251 to 265 (PSANAGNNANANAGA) are enriched in low complexity. A tr-type G domain is found at 393-562 (SRAPVVTIMG…LLEAEVLELK (170 aa)). The interval 402–409 (GHVDHGKT) is G1. 402–409 (GHVDHGKT) serves as a coordination point for GTP. The tract at residues 427-431 (GITQH) is G2. The interval 448–451 (DTPG) is G3. Residues 448-452 (DTPGH) and 502-505 (NKMD) contribute to the GTP site. The segment at 502-505 (NKMD) is G4. Residues 538–540 (SAK) form a G5 region.

Belongs to the TRAFAC class translation factor GTPase superfamily. Classic translation factor GTPase family. IF-2 subfamily.

It is found in the cytoplasm. In terms of biological role, one of the essential components for the initiation of protein synthesis. Protects formylmethionyl-tRNA from spontaneous hydrolysis and promotes its binding to the 30S ribosomal subunits. Also involved in the hydrolysis of GTP during the formation of the 70S ribosomal complex. The polypeptide is Translation initiation factor IF-2 (Shewanella halifaxensis (strain HAW-EB4)).